The primary structure comprises 521 residues: Cytochrome P450 monooxygenase 105 (521 aa).

The helical transmembrane segment at 12–32 (GVASPATLAVAAVTFLTALVL) threads the bilayer. N-linked (GlcNAc...) asparagine glycans are attached at residues asparagine 218, asparagine 274, and asparagine 317. Position 449 (cysteine 449) interacts with heme.

It belongs to the cytochrome P450 family. The cofactor is heme.

It localises to the membrane. The protein operates within secondary metabolite biosynthesis. Its function is as follows. Cytochrome P450 monooxygenase that is able to use anthracene, carbazole, pyrene, phenanthrene and trans-stilbene as substrates for oxidation. These multifunctional properties against a series of polycyclic aromatic hydrocarbons (PAHs) suggest that CYP105 would play important roles, at least in part, in fungal metabolic systems involved in xenobiotic detoxification. In Postia placenta (strain ATCC 44394 / Madison 698-R) (Brown rot fungus), this protein is Cytochrome P450 monooxygenase 105.